Reading from the N-terminus, the 500-residue chain is NAD(P)H-quinone oxidoreductase chain 4, chloroplastic (500 aa).

Helical transmembrane passes span 4–24 (FPWL…MLFL), 35–55 (YTIC…CYNF), 87–107 (IGTI…AFPV), 113–130 (LFHF…GSFS), 134–154 (LLLF…LLAM), 167–187 (FILY…GLSL), 211–231 (ILFY…IPLH), 242–262 (HYST…YGLV), 272–292 (AHSM…IYAA), 305–325 (IAYS…SITD), 330–350 (GAIL…FLAG), 386–406 (LALP…GIIT), 416–436 (ILII…LLSM), and 462–482 (LFLS…PDFV).

Belongs to the complex I subunit 4 family.

It is found in the plastid. It localises to the chloroplast thylakoid membrane. It catalyses the reaction a plastoquinone + NADH + (n+1) H(+)(in) = a plastoquinol + NAD(+) + n H(+)(out). The catalysed reaction is a plastoquinone + NADPH + (n+1) H(+)(in) = a plastoquinol + NADP(+) + n H(+)(out). In Lepidium virginicum (Virginia pepperweed), this protein is NAD(P)H-quinone oxidoreductase chain 4, chloroplastic.